The following is a 573-amino-acid chain: Leucine aminopeptidase, chloroplastic (573 aa).

A chloroplast-targeting transit peptide spans 1–53 (MATLRVSSLLASSPSSLHCNPSVFTKCQSSPRWAFSFSVTPLCSRRSKRIVHC). 2 residues coordinate Mn(2+): Lys-342 and Asp-347. The active site involves Lys-354. The Mn(2+) site is built by Asp-367, Asp-427, and Glu-429. Residue Arg-431 is part of the active site.

Belongs to the peptidase M17 family. As to quaternary structure, homohexamer (dimer of homotrimers). Requires Mn(2+) as cofactor. In terms of tissue distribution, in tubers and floral buds of untreated plants. After abscisic acid (ABA) treatment or mechanical wounding is mostly accumulated in leaves, to a lesser extent in stems, but not in roots.

It localises to the plastid. It is found in the chloroplast. It catalyses the reaction Release of an N-terminal amino acid, Xaa-|-Yaa-, in which Xaa is preferably Leu, but may be other amino acids including Pro although not Arg or Lys, and Yaa may be Pro. Amino acid amides and methyl esters are also readily hydrolyzed, but rates on arylamides are exceedingly low.. It carries out the reaction Release of N-terminal proline from a peptide.. Its function is as follows. Presumably involved in the processing and regular turnover of intracellular proteins. In Solanum tuberosum (Potato), this protein is Leucine aminopeptidase, chloroplastic (LAP).